A 431-amino-acid chain; its full sequence is Reverse prenyltransferase criA (431 aa).

Dimethylallyl diphosphate is bound by residues Arg104, Lys193, Tyr195, Lys262, Tyr264, Tyr347, Tyr412, and Tyr416.

This sequence belongs to the tryptophan dimethylallyltransferase family. Monomer.

The enzyme catalyses cyclo(L-tryptophyl-L-alanyl) + dimethylallyl diphosphate = preechinulin + diphosphate. It participates in secondary metabolite biosynthesis. The protein operates within alkaloid biosynthesis. In terms of biological role, reverse prenyltransferase; part of the gene cluster that mediates the biosynthesis of echinulin family alkaloid. The pathway begins with the biosynthesis of the cyclic dipeptide cyclo-L-Trp-L-Ala (cyclo-TA) by the NRPS criC via condensation of L-alanine and L-tryptophan. The prenyltransferase criA then catalyzes the first prenylation step, a reverse prenylation reaction at C2, to yield preechinulin. Preechinulin is the substrate of the cytochrome P450 monooxygenase criE that catalyzes the formation of the double bond between C10 and C11 to produce neoechulin A. The unique prenyltransferase criF functions as a competitive enzyme with criE for preechinulin metabolization and uses preechinulin for effective regiospecific prenylations. Preechinulin is prenylated by criF at C5 or C7. C7-prenylation leads to accumulation of tardioxopiperazine B without further modification by criF. In contrast, the C5-prenylated tardioxopiperazine A can be prenylated again by criF, predominantly at C7 to form echinulin or less frequently at C4 to give variecolorin L. CriF also accepts neoechilunin A to produce varlecolorin G (prenylation at C5) or isoechinulin A (prenylation at C7). CriF further converts isoechinulin A into dehydroechinulin. Moreover, a yet unidentified enzyme can also convert neoechilunin A into neoechilunin B by introducing a double bond between positions C14 and C17 and thus provides a further substrate to criF for C5 and C7 prenylation. The chain is Reverse prenyltransferase criA from Aspergillus cristatus (Chinese Fuzhuan brick tea-fermentation fungus).